The chain runs to 1004 residues: NACHT, LRR and PYD domains-containing protein 9C (1004 aa).

Residues 1 to 92 (MVDSSSYGLL…TMAQIERRDK (92 aa)) enclose the Pyrin domain. The 323-residue stretch at 143 to 465 (ATAVVLGTRG…KQDKDTYHPV (323 aa)) folds into the NACHT domain. 149 to 156 (GTRGKGKT) provides a ligand contact to ATP. LRR repeat units lie at residues 750 to 770 (KVKHLSLVENPLKNKGVMFLC), 779 to 800 (VLESLMLSYCCLTFIACGHLYE), 807 to 828 (HLSLLDLGSNFLEDIGVNLLCE), 836 to 857 (TLKELWLPGCYLTSECCEEISA), and 864 to 884 (NLKTLKLGNNNIQDTGVKRLC).

The protein belongs to the NLRP family. As to expression, oocyte specific.

The protein localises to the cytoplasm. Functionally, may be involved in inflammation. This chain is NACHT, LRR and PYD domains-containing protein 9C (Nlrp9c), found in Mus musculus (Mouse).